The following is a 763-amino-acid chain: Amine oxidase [copper-containing] 3 (763 aa).

Over 1–6 the chain is Cytoplasmic; sequence MNQKTT. Residues 7–27 traverse the membrane as a helical; Signal-anchor for type II membrane protein segment; it reads LVLLALAVITIFALVCVLIAG. Residues 28–763 are Extracellular-facing; sequence RGGDGGEASQ…AFSHGGFFTN (736 aa). N-linked (GlcNAc...) asparagine glycosylation occurs at Asn-137. Cys-198 and Cys-199 form a disulfide bridge. N-linked (GlcNAc...) asparagine glycans are attached at residues Asn-232 and Asn-294. The active-site Proton acceptor is Asp-386. Cys-404 and Cys-430 are oxidised to a cystine. Tyr-471 serves as the catalytic Schiff-base intermediate with substrate; via topaquinone. Tyr-471 bears the 2',4',5'-topaquinone mark. His-520 and His-522 together coordinate Cu(2+). Residues Asp-529, Leu-530, Asp-531, and Glu-572 each contribute to the Ca(2+) site. Asn-618 carries N-linked (GlcNAc...) asparagine glycosylation. Ca(2+) is bound by residues Glu-641, Phe-663, and Asn-665. Asn-666 is a glycosylation site (N-linked (GlcNAc...) asparagine). Positions 667, 673, and 674 each coordinate Ca(2+). His-684 provides a ligand contact to Cu(2+). The cysteines at positions 734 and 741 are disulfide-linked.

Belongs to the copper/topaquinone oxidase family. In terms of assembly, homodimer; disulfide-linked. Probably forms heterodimers with AOC2. Cu(2+) serves as cofactor. Requires Ca(2+) as cofactor. It depends on L-topaquinone as a cofactor. In terms of processing, topaquinone (TPQ) is generated by copper-dependent autoxidation of a specific tyrosyl residue. N- and O-glycosylated.

Its subcellular location is the cell membrane. It carries out the reaction methylamine + O2 + H2O = formaldehyde + H2O2 + NH4(+). It catalyses the reaction benzylamine + O2 + H2O = benzaldehyde + H2O2 + NH4(+). The enzyme catalyses 2-phenylethylamine + O2 + H2O = 2-phenylacetaldehyde + H2O2 + NH4(+). Its function is as follows. Catalyzes the oxidative deamination of primary amines to the corresponding aldehydes with the concomitant production of hydrogen peroxide and ammonia. Has a preference for the primary monoamines methylamine and benzylamine. Could also act on 2-phenylethylamine but much less efficiently. At endothelial cells surface can also function as a cell adhesion protein that participates in lymphocyte extravasation and recirculation by mediating the binding of lymphocytes to peripheral lymph node vascular endothelial cells in an L-selectin-independent fashion. This chain is Amine oxidase [copper-containing] 3, found in Bos taurus (Bovine).